The sequence spans 26 residues: Turripeptide OL49 (26 aa).

Post-translationally, contains 3 disulfide bonds. Expressed by the venom duct.

The protein resides in the secreted. Its function is as follows. Acts as a neurotoxin by inhibiting an ion channel. This is Turripeptide OL49 from Iotyrris olangoensis (Sea snail).